Here is a 274-residue protein sequence, read N- to C-terminus: Glutamate racemase (274 aa).

Substrate contacts are provided by residues 9–10 (DS) and 41–42 (YG). Cys73 serves as the catalytic Proton donor/acceptor. 74–75 (NT) serves as a coordination point for substrate. Cys183 functions as the Proton donor/acceptor in the catalytic mechanism. Residue 184–185 (TH) coordinates substrate.

It belongs to the aspartate/glutamate racemases family.

It carries out the reaction L-glutamate = D-glutamate. Its pathway is cell wall biogenesis; peptidoglycan biosynthesis. Provides the (R)-glutamate required for cell wall biosynthesis. The sequence is that of Glutamate racemase from Shewanella baltica (strain OS195).